Reading from the N-terminus, the 259-residue chain is MDLLSKTRRINRMLQKSAGHAVNFNEMSQVLSDVIEANTYVVSRKGKLLGFAIHQEMDNSRMRKMLEDRRFPEEYSMGLLKVDETSANLDVDSPYTIFPVEMKEVFRTGWTTLVPIMGGGDRLGTLILGRINDQFVDDDLILAEVGATVVGMEILRERSEAIEEEARSKAVVQMAIGSLSYSELEAVEHIFEELEGKEGLLVASKIADRVGITRSVIVNALRKLESAGVIESRSLGMKGTFIKVLNEKLLPELEKLKTS.

Residues 1 to 155 (MDLLSKTRRI…GATVVGMEIL (155 aa)) are GAF domain. Residues 203–222 (ASKIADRVGITRSVIVNALR) constitute a DNA-binding region (H-T-H motif).

The protein belongs to the CodY family.

The protein localises to the cytoplasm. Its function is as follows. DNA-binding global transcriptional regulator which is involved in the adaptive response to starvation and acts by directly or indirectly controlling the expression of numerous genes in response to nutrient availability. During rapid exponential growth, CodY is highly active and represses genes whose products allow adaptation to nutrient depletion. This Brevibacillus brevis (strain 47 / JCM 6285 / NBRC 100599) protein is Global transcriptional regulator CodY.